A 365-amino-acid polypeptide reads, in one-letter code: DNA replication and repair protein RecF (365 aa).

30–37 (GLNAQGKT) provides a ligand contact to ATP.

It belongs to the RecF family.

It localises to the cytoplasm. The RecF protein is involved in DNA metabolism; it is required for DNA replication and normal SOS inducibility. RecF binds preferentially to single-stranded, linear DNA. It also seems to bind ATP. This Chlamydia trachomatis serovar L2b (strain UCH-1/proctitis) protein is DNA replication and repair protein RecF.